The sequence spans 423 residues: Adenylosuccinate synthetase (423 aa).

GTP contacts are provided by residues 12–18 (GDEGKGK) and 40–42 (GHT). D13 serves as the catalytic Proton acceptor. Mg(2+)-binding residues include D13 and G40. IMP-binding positions include 13–16 (DEGK), 38–41 (NAGH), T128, R142, Q223, T238, and R302. Catalysis depends on H41, which acts as the Proton donor. Substrate is bound at residue 298–304 (TTTGRPR). GTP-binding positions include R304, 330-332 (RLD), and 412-414 (CIG).

The protein belongs to the adenylosuccinate synthetase family. In terms of assembly, homodimer. Requires Mg(2+) as cofactor.

The protein localises to the cytoplasm. The catalysed reaction is IMP + L-aspartate + GTP = N(6)-(1,2-dicarboxyethyl)-AMP + GDP + phosphate + 2 H(+). Its pathway is purine metabolism; AMP biosynthesis via de novo pathway; AMP from IMP: step 1/2. Functionally, plays an important role in the de novo pathway of purine nucleotide biosynthesis. Catalyzes the first committed step in the biosynthesis of AMP from IMP. The polypeptide is Adenylosuccinate synthetase (Dehalococcoides mccartyi (strain ATCC BAA-2100 / JCM 16839 / KCTC 5957 / BAV1)).